Here is a 142-residue protein sequence, read N- to C-terminus: HTH-type transcriptional regulator MntR (142 aa).

The HTH dtxR-type domain occupies M1–T63. Residues D8, E11, H77, E99, E102, and H103 each coordinate Mn(2+).

This sequence belongs to the DtxR/MntR family. As to quaternary structure, homodimer.

Its subcellular location is the cytoplasm. With respect to regulation, DNA binding is strongly activated by Mn(2+). Functionally, central regulator of manganese homeostasis. The sequence is that of HTH-type transcriptional regulator MntR from Bacillus cereus (strain AH820).